The sequence spans 118 residues: Putative cytochrome P450 family member 4F30 (118 aa).

The tract at residues 1 to 64 (MVTPAGCLGG…GPLHILGTDG (64 aa)) is disordered. A compositionally biased stretch (polar residues) spans 28–43 (RAGQTGQAVSGAQVSS).

This is Putative cytochrome P450 family member 4F30 (CYP4F30P) from Homo sapiens (Human).